We begin with the raw amino-acid sequence, 597 residues long: Replication protein E1 (597 aa).

A Nuclear localization signal motif is present at residues Lys75–Lys77. Ser81, Ser91, and Ser104 each carry phosphoserine; by host. The Nuclear export signal signature appears at Leu90 to Leu99. A disordered region spans residues Gln119–Glu141. The interval Leu137–Glu300 is DNA-binding region. The SF3 helicase domain maps to Ile400–Gly550. Residue Gly426–Ser433 participates in ATP binding. A Glycyl lysine isopeptide (Lys-Gly) (interchain with G-Cter in SUMO) cross-link involves residue Lys507. The tract at residues Pro574–Val597 is disordered.

This sequence belongs to the papillomaviridae E1 protein family. In terms of assembly, can form hexamers. Interacts with E2 protein; this interaction increases E1 DNA binding specificity. Interacts with host DNA polymerase subunit POLA2. Interacts with host single stranded DNA-binding protein RPA1. Interacts with host TOP1; this interaction stimulates the enzymatic activity of TOP1. Phosphorylated. Post-translationally, sumoylated.

The protein resides in the host nucleus. The catalysed reaction is Couples ATP hydrolysis with the unwinding of duplex DNA by translocating in the 3'-5' direction.. It catalyses the reaction ATP + H2O = ADP + phosphate + H(+). Functionally, ATP-dependent DNA 3'-5' helicase required for initiation of viral DNA replication. It forms a complex with the viral E2 protein. The E1-E2 complex binds to the replication origin which contains binding sites for both proteins. During the initial step, a dimer of E1 interacts with a dimer of protein E2 leading to a complex that binds the viral origin of replication with high specificity. Then, a second dimer of E1 displaces the E2 dimer in an ATP-dependent manner to form the E1 tetramer. Following this, two E1 monomers are added to each half of the site, which results in the formation of two E1 trimers on the viral ori. Subsequently, two hexamers will be created. The double hexamer acts as a bi-directional helicase machinery and unwinds the viral DNA and then recruits the host DNA polymerase to start replication. This is Replication protein E1 from Canis lupus familiaris (Dog).